Reading from the N-terminus, the 611-residue chain is Chaperone protein HtpG (611 aa).

The interval 1 to 326 is a; substrate-binding; that stretch reads MSETLERHAF…TEDLPLNVSR (326 aa). The tract at residues 327 to 536 is b; sequence EMLQATPVLA…SGGPDLQMQR (210 aa). The segment at 537–611 is c; that stretch reads LLRRAGRGFG…RVAAALAAQA (75 aa).

This sequence belongs to the heat shock protein 90 family. As to quaternary structure, homodimer.

It localises to the cytoplasm. Functionally, molecular chaperone. Has ATPase activity. In Methylobacterium sp. (strain 4-46), this protein is Chaperone protein HtpG.